Here is an 869-residue protein sequence, read N- to C-terminus: H(+)/Cl(-) exchange transporter 6 (869 aa).

Topologically, residues 1 to 80 (MAGCRGSLCC…KKGRWYEVVK (80 aa)) are cytoplasmic. The next 2 membrane-spanning stretches (helical) occupy residues 81–113 (WTVV…FGVV) and 128–150 (LSLL…LVLI). Positions 156 to 160 (GSGIP) match the Selectivity filter part_1 motif. Residue S157 coordinates chloride. Residues 159 to 166 (IPEIKCYL) constitute an intramembrane region (helical). Helical transmembrane passes span 176–194 (RLRT…VAGG) and 200–217 (EGPM…LPQF). The short motif at 198 to 202 (GKEGP) is the Selectivity filter part_2 element. 2 intramembrane regions (helical) span residues 241–253 (FVSA…IAAA) and 257–265 (PIGATLFSL). 3 consecutive transmembrane segments (helical) span residues 277–294 (TWKV…LNFF), 335–364 (GFFV…YRMR), and 371–392 (KLVR…VFVA). Residues N410, N422, and N432 are each glycosylated (N-linked (GlcNAc...) asparagine). A run of 2 helical transmembrane segments spans residues 462 to 481 (PITL…WTYG) and 487 to 511 (GLFV…KSYI). The Selectivity filter part_3 motif lies at 487 to 491 (GLFVP). Residue F489 coordinates chloride. An intramembrane region (helical) is located at residues 519–533 (GTFSLIGAAALLGGV). The segment at residues 534-536 (VRM) is an intramembrane region (note=Loop between two helices). The helical intramembrane region spans 537-548 (TISLTVILIEST). Positions 549 to 552 (NEIT) form an intramembrane region, note=Loop between two helices. The chain crosses the membrane as a helical span at residues 553–571 (YGLPIMITLMVAKWTGDFF). The Cytoplasmic segment spans residues 572–869 (NKGIYDIHVG…ARLRQHYQTI (298 aa)). Y576 lines the chloride pocket. The CBS 1 domain maps to 605-662 (MEPNLTYVYPHTRIQSLVSILRTTVHHAFPVVTENRGNEKEFMKGNQLISNNIKFKKS). 630–632 (HHA) lines the ATP pocket. The disordered stretch occupies residues 668–687 (AGEQRRRSQSMKSYPSSELR). Residues 677-686 (SMKSYPSSEL) show a composition bias toward polar residues. S773 bears the Phosphoserine mark. The region spanning 807–868 (MNPSPFTVSP…QARLRQHYQT (62 aa)) is the CBS 2 domain. ATP is bound at residue 849-852 (TRHN).

This sequence belongs to the chloride channel (TC 2.A.49) family. ClC-6/CLCN6 subfamily. N-glycosylated on several asparagine residues.

Its subcellular location is the late endosome membrane. The enzyme catalyses 2 chloride(in) + H(+)(out) = 2 chloride(out) + H(+)(in). Voltage-gated channel mediating the exchange of chloride ions against protons. Functions as antiporter and contributes to the acidification of the late endosome lumen. The CLC channel family contains both chloride channels and proton-coupled anion transporters that exchange chloride or another anion for protons. The presence of conserved gating glutamate residues is typical for family members that function as antiporters. This chain is H(+)/Cl(-) exchange transporter 6 (CLCN6), found in Oryctolagus cuniculus (Rabbit).